The sequence spans 327 residues: Glycerol-3-phosphate dehydrogenase [NAD(P)+] (327 aa).

NADPH is bound by residues Phe13, Arg34, and Lys107. Residues Lys107 and Gly135 each coordinate sn-glycerol 3-phosphate. Ala139 provides a ligand contact to NADPH. The sn-glycerol 3-phosphate site is built by Lys190, Asp243, Ser253, Arg254, and Asn255. The active-site Proton acceptor is Lys190. Arg254 is an NADPH binding site. The NADPH site is built by Val276 and Glu277.

Belongs to the NAD-dependent glycerol-3-phosphate dehydrogenase family.

It is found in the cytoplasm. It carries out the reaction sn-glycerol 3-phosphate + NAD(+) = dihydroxyacetone phosphate + NADH + H(+). The catalysed reaction is sn-glycerol 3-phosphate + NADP(+) = dihydroxyacetone phosphate + NADPH + H(+). Its pathway is membrane lipid metabolism; glycerophospholipid metabolism. Its function is as follows. Catalyzes the reduction of the glycolytic intermediate dihydroxyacetone phosphate (DHAP) to sn-glycerol 3-phosphate (G3P), the key precursor for phospholipid synthesis. The polypeptide is Glycerol-3-phosphate dehydrogenase [NAD(P)+] (Rhizobium etli (strain ATCC 51251 / DSM 11541 / JCM 21823 / NBRC 15573 / CFN 42)).